Here is a 1444-residue protein sequence, read N- to C-terminus: Rho GTPase-activating protein 31 (1444 aa).

In terms of domain architecture, Rho-GAP spans 21–216; the sequence is CDLTEYLESS…FILNHVDQIF (196 aa). The residue at position 272 (serine 272) is a Phosphoserine. Threonine 286 carries the phosphothreonine modification. 3 positions are modified to phosphoserine: serine 346, serine 349, and serine 387. The tract at residues 398–427 is disordered; that stretch reads WGQEGMPPGAEGGFDVSSDRSHLQGAQARP. Phosphoserine is present on serine 476. Positions 504–631 are disordered; the sequence is TNSTPCRTPP…ESSTLQESPR (128 aa). Residues 515-534 are compositionally biased toward low complexity; the sequence is ELQSLSSLEEFSFHGSESGG. A compositionally biased stretch (basic and acidic residues) spans 600–619; that stretch reads NELEKRPNPEKVVEEGREAG. Position 679 is a phosphothreonine (threonine 679). 2 disordered regions span residues 688–893 and 906–1108; these read SSLG…EDDT and EPWE…SSLN. Residues serine 701 and serine 712 each carry the phosphoserine modification. Positions 722 to 734 are enriched in polar residues; that stretch reads PANQSTQGASTAA. The span at 735–745 shows a compositional bias: basic and acidic residues; the sequence is SREKPEPEQGL. Positions 777 to 790 are enriched in pro residues; sequence LSPPLPPAPPPPTP. The residue at position 778 (serine 778) is a Phosphoserine. Residue threonine 789 is modified to Phosphothreonine. The span at 803–817 shows a compositional bias: basic and acidic residues; sequence GPEREDSSRKLRTDL. Residues 822–834 are compositionally biased toward polar residues; sequence LKSQDSPEISSLC. The segment covering 839–848 has biased composition (basic and acidic residues); that stretch reads ATPRHSDKQN. A compositionally biased stretch (polar residues) spans 960 to 977; sequence TVKSQWTLEVPSSSSCAN. At serine 974 the chain carries Phosphoserine. Basic and acidic residues predominate over residues 992 to 1008; it reads PRREITGWDEKALRSFR. A compositionally biased stretch (polar residues) spans 1028 to 1038; the sequence is VQPNPAETSPI. Positions 1064–1075 are enriched in low complexity; the sequence is GPESSKESSPSV. Serine 1105, serine 1106, and serine 1178 each carry phosphoserine. Polar residues-rich tracts occupy residues 1211–1224 and 1234–1245; these read QIPQ…SGEN and EGPSSTSGTTQK. A disordered region spans residues 1211 to 1346; that stretch reads QIPQPLPSQS…HRSRPGRPQS (136 aa). A compositionally biased stretch (basic and acidic residues) spans 1246–1265; that stretch reads PAKDDSPSSLESSKEEKPKQ. 2 stretches are compositionally biased toward polar residues: residues 1292 to 1303 and 1314 to 1323; these read PGSSNLLSTQDA and TEPSGDNLLS.

Interacts with ITSN1, which inhibits GAP activity. Interacts with PARVA. Interacts with GTP-loaded RHOU. Post-translationally, phosphorylation on Thr-789 reduces GAP activity.

The protein resides in the cell projection. The protein localises to the lamellipodium. Its subcellular location is the cell junction. It is found in the focal adhesion. Functions as a GTPase-activating protein (GAP) for RAC1 and CDC42. Required for cell spreading, polarized lamellipodia formation and cell migration. The chain is Rho GTPase-activating protein 31 (ARHGAP31) from Homo sapiens (Human).